The following is a 342-amino-acid chain: Mitochondrial fission factor (342 aa).

The Cytoplasmic portion of the chain corresponds to 1–322; it reads MSKGTSSDTS…ENKERAKREM (322 aa). T115 carries the phosphothreonine modification. A146 carries the post-translational modification Phosphoserine. At R149 the chain carries Phosphothreonine. Phosphoserine occurs at positions 151, 155, 157, and 172. A Phosphothreonine modification is found at T200. Residues S202, S229, S233, and S295 each carry the phosphoserine modification. A coiled-coil region spans residues 291–322; sequence VDAASLRRQIIKLNRRLQLLEEENKERAKREM. A helical; Anchor for type IV membrane protein membrane pass occupies residues 323 to 340; sequence VMYSITVAFWLLNSWLWF. At 341 to 342 the chain is on the mitochondrial intermembrane side; the sequence is RR.

It belongs to the Tango11 family. Homodimer. Interacts with DNM1L. Interacts with C11orf65/MFI; the interaction inhibits MFF interaction with DNM1L. As to expression, highly expressed in heart, kidney, liver, brain, muscle, and stomach.

It localises to the mitochondrion outer membrane. The protein resides in the peroxisome. The protein localises to the cytoplasmic vesicle. Its subcellular location is the secretory vesicle. It is found in the synaptic vesicle. Functionally, plays a role in mitochondrial and peroxisomal fission. Promotes the recruitment and association of the fission mediator dynamin-related protein 1 (DNM1L) to the mitochondrial surface. May be involved in regulation of synaptic vesicle membrane dynamics by recruitment of DNM1L to clathrin-containing vesicles. This is Mitochondrial fission factor (MFF) from Homo sapiens (Human).